Reading from the N-terminus, the 701-residue chain is DNA ligase (701 aa).

Residues 43-47, 92-93, and E126 contribute to the NAD(+) site; these read DAAYD and SL. The active-site N6-AMP-lysine intermediate is K128. Positions 149, 186, 302, and 326 each coordinate NAD(+). Positions 420, 423, 444, and 450 each coordinate Zn(2+). The region spanning 623-701 is the BRCT domain; that stretch reads ANDSPVAGKT…EDEWFDLIGA (79 aa).

Belongs to the NAD-dependent DNA ligase family. LigA subfamily. Mg(2+) serves as cofactor. It depends on Mn(2+) as a cofactor.

The enzyme catalyses NAD(+) + (deoxyribonucleotide)n-3'-hydroxyl + 5'-phospho-(deoxyribonucleotide)m = (deoxyribonucleotide)n+m + AMP + beta-nicotinamide D-nucleotide.. DNA ligase that catalyzes the formation of phosphodiester linkages between 5'-phosphoryl and 3'-hydroxyl groups in double-stranded DNA using NAD as a coenzyme and as the energy source for the reaction. It is essential for DNA replication and repair of damaged DNA. The protein is DNA ligase of Maricaulis maris (strain MCS10) (Caulobacter maris).